Consider the following 139-residue polypeptide: NADPH-dependent 7-cyano-7-deazaguanine reductase (139 aa).

The active-site Thioimide intermediate is Cys34. Asp41 acts as the Proton donor in catalysis. Substrate is bound by residues Val56 to Leu58 and His75 to Glu76.

The protein belongs to the GTP cyclohydrolase I family. QueF type 1 subfamily.

Its subcellular location is the cytoplasm. The enzyme catalyses 7-aminomethyl-7-carbaguanine + 2 NADP(+) = 7-cyano-7-deazaguanine + 2 NADPH + 3 H(+). The protein operates within tRNA modification; tRNA-queuosine biosynthesis. Catalyzes the NADPH-dependent reduction of 7-cyano-7-deazaguanine (preQ0) to 7-aminomethyl-7-deazaguanine (preQ1). This is NADPH-dependent 7-cyano-7-deazaguanine reductase from Thiobacillus denitrificans (strain ATCC 25259 / T1).